The chain runs to 1133 residues: Early transcription factor large subunit homolog (1133 aa).

The 301-residue stretch at 52–352 (KGGRAFFPCD…PNGQPLQRQQ (301 aa)) folds into the Helicase ATP-binding domain. 99 to 106 (WQTGTGKS) contributes to the ATP binding site. The short motif at 281–284 (DEIH) is the DEAH box element. A Helicase C-terminal domain is found at 524-724 (MMKDILSIIR…EGDKALRKHA (201 aa)).

This sequence belongs to the DEAD box helicase family. DEAH subfamily.

Its subcellular location is the virion. It catalyses the reaction ATP + H2O = ADP + phosphate + H(+). In terms of biological role, putative initation factor. The polypeptide is Early transcription factor large subunit homolog (Ornithodoros (relapsing fever ticks)).